The following is a 412-amino-acid chain: Hyaluronidase-3 (412 aa).

The signal sequence occupies residues methionine 1–alanine 22. 5 disulfides stabilise this stretch: cysteine 42–cysteine 332, cysteine 206–cysteine 221, cysteine 357–cysteine 368, cysteine 362–cysteine 396, and cysteine 398–cysteine 407. N-linked (GlcNAc...) asparagine glycosylation occurs at asparagine 69. The active-site Proton donor is glutamate 129. Residue asparagine 216 is glycosylated (N-linked (GlcNAc...) asparagine). The EGF-like domain occupies alanine 353–leucine 408.

Belongs to the glycosyl hydrolase 56 family. N-glycosylated.

The protein localises to the secreted. It is found in the cell membrane. Its subcellular location is the cytoplasmic vesicle. The protein resides in the secretory vesicle. It localises to the acrosome. The protein localises to the endoplasmic reticulum. It is found in the early endosome. The enzyme catalyses Random hydrolysis of (1-&gt;4)-linkages between N-acetyl-beta-D-glucosamine and D-glucuronate residues in hyaluronate.. Functionally, facilitates sperm penetration into the layer of cumulus cells surrounding the egg by digesting hyaluronic acid. Involved in induction of the acrosome reaction in the sperm. Involved in follicular atresia, the breakdown of immature ovarian follicles that are not selected to ovulate. Induces ovarian granulosa cell apoptosis, possibly via apoptotic signaling pathway involving CASP8 and CASP3 activation, and poly(ADP-ribose) polymerase (PARP) cleavage. Has no hyaluronidase activity in embryonic fibroblasts in vitro. Has no hyaluronidase activity in granulosa cells in vitro. This is Hyaluronidase-3 (Hyal3) from Rattus norvegicus (Rat).